A 481-amino-acid chain; its full sequence is Serine--tRNA ligase (481 aa).

An L-serine-binding site is contributed by Thr-284 to Glu-286. Arg-315 to Glu-317 provides a ligand contact to ATP. Glu-338 serves as a coordination point for L-serine. ATP is bound at residue Glu-405–Ser-408. An L-serine-binding site is contributed by Ser-440.

The protein belongs to the class-II aminoacyl-tRNA synthetase family. Type-1 seryl-tRNA synthetase subfamily. In terms of assembly, homodimer. The tRNA molecule binds across the dimer.

It localises to the cytoplasm. The catalysed reaction is tRNA(Ser) + L-serine + ATP = L-seryl-tRNA(Ser) + AMP + diphosphate + H(+). The enzyme catalyses tRNA(Sec) + L-serine + ATP = L-seryl-tRNA(Sec) + AMP + diphosphate + H(+). Its pathway is aminoacyl-tRNA biosynthesis; selenocysteinyl-tRNA(Sec) biosynthesis; L-seryl-tRNA(Sec) from L-serine and tRNA(Sec): step 1/1. Catalyzes the attachment of serine to tRNA(Ser). Is also able to aminoacylate tRNA(Sec) with serine, to form the misacylated tRNA L-seryl-tRNA(Sec), which will be further converted into selenocysteinyl-tRNA(Sec). The chain is Serine--tRNA ligase from Rhodopseudomonas palustris (strain BisB18).